The primary structure comprises 196 residues: Urease accessory protein UreE (196 aa).

Residues 150 to 196 (RGAYSGGHDHGHAHAHSHAEAHSHAHGESHSHSHSHSHDDHHHHDHD) form a disordered region. Basic and acidic residues predominate over residues 156 to 196 (GHDHGHAHAHSHAEAHSHAHGESHSHSHSHSHDDHHHHDHD).

The protein belongs to the UreE family.

It is found in the cytoplasm. Involved in urease metallocenter assembly. Binds nickel. Probably functions as a nickel donor during metallocenter assembly. In Mesorhizobium japonicum (strain LMG 29417 / CECT 9101 / MAFF 303099) (Mesorhizobium loti (strain MAFF 303099)), this protein is Urease accessory protein UreE.